A 445-amino-acid chain; its full sequence is F-box protein At5g10340 (445 aa).

Residues 64 to 112 (SMEELLPHDVIEYHIMVRLDVKTLLKFKSVSKQWMSTIQSPSFQERQLI) enclose the F-box domain.

This is F-box protein At5g10340 from Arabidopsis thaliana (Mouse-ear cress).